The sequence spans 326 residues: Zona pellucida-binding protein 2 (326 aa).

The signal sequence occupies residues M1–S19. 3 N-linked (GlcNAc...) asparagine glycosylation sites follow: N86, N220, and N256.

The protein belongs to the zona pellucida-binding protein Sp38 family. In terms of processing, N-glycosylated. In terms of tissue distribution, expressed specifically in male germ cells.

It localises to the cytoplasmic vesicle. The protein resides in the secretory vesicle. Its subcellular location is the acrosome. The protein localises to the secreted. Its function is as follows. Is implicated in sperm-oocyte interaction during fertilization. In Mus musculus (Mouse), this protein is Zona pellucida-binding protein 2 (Zpbp2).